A 456-amino-acid polypeptide reads, in one-letter code: Protein MGA1 (456 aa).

A DNA-binding region spans residues Pro-3–Thr-118. Residues Ser-229–Ser-299 are disordered. Composition is skewed to low complexity over residues Val-231–Ser-246, Ser-253–Leu-267, and Gln-283–Ser-299.

The protein belongs to the HSF family.

It localises to the nucleus. The protein is Protein MGA1 (MGA1) of Saccharomyces cerevisiae (strain ATCC 204508 / S288c) (Baker's yeast).